A 282-amino-acid polypeptide reads, in one-letter code: Glutamate--LysW ligase ArgX (282 aa).

Residues lysine 87, lysine 127, glycine 131–valine 137, and glutamine 167–arginine 178 contribute to the ATP site. Residues tyrosine 91–lysine 277 form the ATP-grasp domain. Residue arginine 192 coordinates substrate. Position 202 (asparagine 202) interacts with ATP. Valine 203–alanine 204 is a substrate binding site. 3 residues coordinate Mg(2+): aspartate 237, glutamate 250, and asparagine 252. Glutamate 256 to phenylalanine 260 contributes to the substrate binding site. A GF motif that is essential for ArgX substrate specificity motif is present at residues glycine 259–phenylalanine 260.

Belongs to the RimK family. LysX subfamily. Homotetramer. Interacts with LysW. Mg(2+) serves as cofactor.

It carries out the reaction [amino-group carrier protein]-C-terminal-L-glutamate + L-glutamate + ATP = [amino-group carrier protein]-C-terminal-gamma-(L-glutamyl)-L-glutamate + ADP + phosphate + H(+). It functions in the pathway amino-acid biosynthesis; L-arginine biosynthesis. Catalyzes the ATP-dependent formation of a covalent bond between the amino group of glutamate and the gamma-carboxyl group of the C-terminal glutamate residue in LysW. The chain is Glutamate--LysW ligase ArgX from Sulfurisphaera tokodaii (strain DSM 16993 / JCM 10545 / NBRC 100140 / 7) (Sulfolobus tokodaii).